A 90-amino-acid chain; its full sequence is Large ribosomal subunit protein eL37 (90 aa).

Residues 13–46 (NKSHTLCNRCGRRSFHVQKKTCSSCGYPAAKMRS) form an A20-type zinc finger. Zn(2+) is bound by residues Cys-19, Cys-22, Cys-34, and Cys-37.

Belongs to the eukaryotic ribosomal protein eL37 family. As to quaternary structure, component of the large ribosomal subunit. Mature ribosomes consist of a small (40S) and a large (60S) subunit. The 40S subunit contains about 32 different proteins and 1 molecule of RNA (18S). The 60S subunit contains 45 different proteins and 3 molecules of RNA (25S, 5.8S and 5S). Requires Zn(2+) as cofactor.

The protein resides in the cytoplasm. Its function is as follows. Component of the ribosome, a large ribonucleoprotein complex responsible for the synthesis of proteins in the cell. The small ribosomal subunit (SSU) binds messenger RNAs (mRNAs) and translates the encoded message by selecting cognate aminoacyl-transfer RNA (tRNA) molecules. The large subunit (LSU) contains the ribosomal catalytic site termed the peptidyl transferase center (PTC), which catalyzes the formation of peptide bonds, thereby polymerizing the amino acids delivered by tRNAs into a polypeptide chain. The nascent polypeptides leave the ribosome through a tunnel in the LSU and interact with protein factors that function in enzymatic processing, targeting, and the membrane insertion of nascent chains at the exit of the ribosomal tunnel. In Candida albicans (strain SC5314 / ATCC MYA-2876) (Yeast), this protein is Large ribosomal subunit protein eL37.